The primary structure comprises 358 residues: Trace amine-associated receptor 7f (358 aa).

The Extracellular portion of the chain corresponds to 1-47 (MSIADETVSWNQDSILSRDLFSATSAELCYENLNRSCVRSPYSPGPR). N-linked (GlcNAc...) asparagine glycosylation occurs at Asn-34. 2 disulfides stabilise this stretch: Cys-37–Cys-201 and Cys-120–Cys-205. The helical transmembrane segment at 48–68 (LILYAVFGFGAVLAVCGNLLV) threads the bilayer. The Cytoplasmic segment spans residues 69–83 (MTSILHFRQLHSPAN). The chain crosses the membrane as a helical span at residues 84–104 (FLVASLACADFLVGVMVMPFS). At 105–121 (MVRSVEGCWYFGDSYCK) the chain is on the extracellular side. A helical membrane pass occupies residues 122–143 (LHTCFDVSFCYCSLFHLCFISV). Residues 144 to 166 (DRYIAVSDPLAYPTRFTASVSGK) lie on the Cytoplasmic side of the membrane. Residues 167–187 (CITFSWLLSISYGFSLIYTGA) traverse the membrane as a helical segment. Over 188 to 212 (SEAGLEDLVSSLTCVGGCQIAVNQT) the chain is Extracellular. A glycan (N-linked (GlcNAc...) asparagine) is linked at Asn-210. A helical membrane pass occupies residues 213–233 (WVFINFSVFLIPTLVMITVYS). Residues 234-274 (KIFLIAKQQAQNIEKMSKQTARASDSYKDRVAKRERKAAKT) are Cytoplasmic-facing. Residues 275 to 295 (LGIAVAAFLLSWLPYFIDSFI) form a helical membrane-spanning segment. The Extracellular portion of the chain corresponds to 296 to 309 (DAFLGFITPTYVYE). A helical transmembrane segment spans residues 310–333 (ILVWIVYYNSAMNPLIYAFFYPWF). Topologically, residues 334-358 (RKAIKLTVTGKILRENSSTTNLFSE) are cytoplasmic.

Belongs to the G-protein coupled receptor 1 family. In terms of tissue distribution, specifically expressed in neurons of the olfactory epithelium.

It localises to the cell membrane. In terms of biological role, olfactory receptor activated by trace amines, such as N-methylpiperidine and N,N-dimethylcyclohexylamine. Trace amine compounds are enriched in animal body fluids and act on trace amine-associated receptors (TAARs) to elicit both intraspecific and interspecific innate behaviors. Ligand-binding causes a conformation change that triggers signaling via G(s)-class of G alpha proteins (GNAL or GNAS). The sequence is that of Trace amine-associated receptor 7f from Mus musculus (Mouse).